The following is a 424-amino-acid chain: Dihydroorotase-like protein (424 aa).

This sequence belongs to the metallo-dependent hydrolases superfamily. DHOase family. PyrC' subfamily. As to quaternary structure, heterododecamer of 6 active PyrB subunits and 6 non-catalytic PyrC' subunits.

In terms of biological role, non-functional DHOase. This Pseudomonas putida (Arthrobacter siderocapsulatus) protein is Dihydroorotase-like protein.